The primary structure comprises 428 residues: Peptidase B (428 aa).

2 residues coordinate Mn(2+): Lys-195 and Asp-200. Lys-207 is an active-site residue. Mn(2+) is bound by residues Asp-218, Asp-277, and Glu-279. The active site involves Arg-281.

Belongs to the peptidase M17 family. As to quaternary structure, homohexamer. Requires Mn(2+) as cofactor.

The protein resides in the cytoplasm. It catalyses the reaction Release of an N-terminal amino acid, Xaa, from a peptide or arylamide. Xaa is preferably Glu or Asp but may be other amino acids, including Leu, Met, His, Cys and Gln.. Probably plays an important role in intracellular peptide degradation. This chain is Peptidase B, found in Enterobacter sp. (strain 638).